Consider the following 466-residue polypeptide: Ras-GEF domain-containing family member 1C (466 aa).

Disordered regions lie at residues 1–35 and 443–466; these read MPRT…PLLD and SESP…LGKT. One can recognise an N-terminal Ras-GEF domain in the interval 34 to 164; the sequence is LDGAPSSASL…LLQTLHQKLA (131 aa). The Ras-GEF domain occupies 200-446; it reads DPYTLAQQLT…YLASYESESP (247 aa).

In terms of biological role, guanine nucleotide exchange factor (GEF). This Mus musculus (Mouse) protein is Ras-GEF domain-containing family member 1C (Rasgef1c).